A 243-amino-acid chain; its full sequence is UPF0758 protein MAE_44350 (243 aa).

Residues valine 113–leucine 235 enclose the MPN domain. Residues histidine 184, histidine 186, and aspartate 197 each coordinate Zn(2+). Residues histidine 184–aspartate 197 carry the JAMM motif motif.

This sequence belongs to the UPF0758 family.

This chain is UPF0758 protein MAE_44350, found in Microcystis aeruginosa (strain NIES-843 / IAM M-2473).